A 69-amino-acid chain; its full sequence is MAFLKKSLFLVLFLGMVSLSICEEEKRENEDEEKQEDDEQSEMKRGLWSTIKNVAAAAGKAALGALGEQ.

The N-terminal stretch at 1-22 is a signal peptide; the sequence is MAFLKKSLFLVLFLGMVSLSIC. The propeptide occupies 23-43; that stretch reads EEEKRENEDEEKQEDDEQSEM. Residues 24–44 are disordered; the sequence is EEKRENEDEEKQEDDEQSEMK. Residues 30–40 show a composition bias toward acidic residues; sequence EDEEKQEDDEQ. Leucine 66 carries the leucine amide modification. Positions 68 to 69 are excised as a propeptide; it reads EQ.

Belongs to the frog skin active peptide (FSAP) family. Dermaseptin subfamily. As to expression, expressed by the skin glands.

The protein resides in the secreted. Functionally, possesses a potent antimicrobial activity against Gram-positive and Gram-negative bacteria. Probably acts by disturbing membrane functions with its amphipathic structure. This Pithecopus azureus (Orange-legged monkey tree frog) protein is Dermaseptin-H3.